The primary structure comprises 273 residues: Homeobox protein Nkx-2.2 (273 aa).

Disordered regions lie at residues 1 to 56 (MSLT…LDAV) and 91 to 131 (AASA…KRKR). A compositionally biased stretch (acidic residues) spans 20–38 (DTNDEDGSVAEGPEEESEG). The homeobox DNA-binding region spans 128–187 (KRKRRVLFSKAQTYELERRFRQQRYLSAPEREHLASLIRLTPTQVKIWFQNHRYKMKRAR).

It belongs to the NK-2 homeobox family. In terms of assembly, interacts with OLIG2. In terms of tissue distribution, expressed in restricted areas of the developing CNS: the hindbrain and forebrain, and pancreas.

It is found in the nucleus. Functionally, transcriptional activator involved in the development of insulin-producting beta cells in the endocrine pancreas. May also be involved in specifying diencephalic neuromeric boundaries, and in controlling the expression of genes that play a role in axonal guidance. Binds to elements within the NEUROD1 promoter. This Mus musculus (Mouse) protein is Homeobox protein Nkx-2.2 (Nkx2-2).